We begin with the raw amino-acid sequence, 1073 residues long: Duffy receptor alpha form (1073 aa).

Positions 1–21 are cleaved as a signal peptide; that stretch reads MEGKKKRPLFFLLVLLLSHKA. Residues 22–1007 lie on the Extracellular side of the membrane; that stretch reads NNVLFERMNG…YECFTKGSST (986 aa). N-linked (GlcNAc...) asparagine glycans are attached at residues Asn-134, Asn-179, and Asn-202. Cystine bridges form between Cys-214–Cys-243 and Cys-227–Cys-234. N-linked (GlcNAc...) asparagine glycosylation is found at Asn-252 and Asn-348. Cystine bridges form between Cys-297/Cys-374, Cys-412/Cys-429, Cys-424/Cys-504, and Cys-433/Cys-502. The tract at residues 517–915 is disordered; it reads VKNVGSGVES…LNNRKLNRDQ (399 aa). A compositionally biased stretch (polar residues) spans 528–543; sequence AASSNPITEAVKSSSG. Over residues 546-561 the composition is skewed to basic and acidic residues; the sequence is KVQEDSAHKSVNKGEG. Positions 562-576 are enriched in polar residues; that stretch reads KSSTNEADPGSQSGA. Basic and acidic residues-rich tracts occupy residues 675–710 and 717–734; these read GEVHNGTDTEPKEDGEKADPQKDIEVKGKQDTDDRS and HTDERATLGETHMEKDTE. A glycan (N-linked (GlcNAc...) asparagine) is linked at Asn-679. Residues 736-766 show a composition bias toward polar residues; it reads AGGSTLTPEQNVSVASDNGNVPGSGNKQNEG. Residues Asn-746, Asn-779, and Asn-788 are each glycosylated (N-linked (GlcNAc...) asparagine). The span at 799 to 810 shows a compositional bias: basic and acidic residues; the sequence is GNEKDFQKHDFM. Low complexity-rich tracts occupy residues 821–843 and 851–864; these read SDHTSSDQTSSDHTSSDQTSSDH and SDQTSSDQTSSDQT. Residues 867–891 are compositionally biased toward basic and acidic residues; that stretch reads TEGHHRDNVRNPEIKSSEDMSKGDF. Positions 893 to 909 are enriched in polar residues; sequence RNSNSNELYSHNNLNNR. The helical transmembrane segment at 1008 to 1029 threads the bilayer; it reads GIVYFATGGAFLIILLLFASWN. Over 1030–1073 the chain is Cytoplasmic; it reads AASNDYEEEATFDEFVEYSDDIHRTPLMPNDIEHMQQFTPLDYS.

In terms of assembly, interacts (via region II) with human ACKR1 (via N-terminal extracellular domain). Interacts (via region II) with rhesus macaque ACKR1 (via N-terminal extracellular domain).

The protein resides in the cell membrane. It localises to the cytoplasmic vesicle. The protein localises to the secretory vesicle. Its subcellular location is the microneme. Its function is as follows. Binds to the human erythrocyte Duffy blood group determinant (ACKR1). Binds to the rhesus macaque erythrocyte Duffy blood group determinant (ACKR1). In Plasmodium knowlesi, this protein is Duffy receptor alpha form.